A 185-amino-acid chain; its full sequence is Ribosome-recycling factor (185 aa).

The protein belongs to the RRF family.

Its subcellular location is the cytoplasm. Functionally, responsible for the release of ribosomes from messenger RNA at the termination of protein biosynthesis. May increase the efficiency of translation by recycling ribosomes from one round of translation to another. The chain is Ribosome-recycling factor from Halalkalibacterium halodurans (strain ATCC BAA-125 / DSM 18197 / FERM 7344 / JCM 9153 / C-125) (Bacillus halodurans).